Consider the following 58-residue polypeptide: Light-harvesting protein B-870 alpha chain (58 aa).

At 1 to 15 (MSKFYKIWLVFDPRR) the chain is on the cytoplasmic side. Residues 16–36 (VFVAQGVFLFLLAVLIHLILL) form a helical membrane-spanning segment. H32 is an a bacteriochlorophyll binding site. Residues 37–58 (STPAFNWLTVATAKHGYVAAAQ) lie on the Periplasmic side of the membrane.

It belongs to the antenna complex alpha subunit family. As to quaternary structure, the core complex is formed by different alpha and beta chains, binding bacteriochlorophyll molecules, and arranged most probably in tetrameric structures disposed around the reaction center. The non-pigmented gamma chains may constitute additional components.

Its subcellular location is the cell inner membrane. Functionally, antenna complexes are light-harvesting systems, which transfer the excitation energy to the reaction centers. The chain is Light-harvesting protein B-870 alpha chain (pufA) from Rhodobacter capsulatus (Rhodopseudomonas capsulata).